The primary structure comprises 179 residues: ADP-ribosylation factor-like protein 5A (179 aa).

Gly-2 carries the N-myristoyl glycine lipid modification. Residues 23-30, 66-70, 125-128, and Ala-159 contribute to the GTP site; these read GLDNAGKT, DIGGQ, and NKQD.

Belongs to the small GTPase superfamily. Arf family.

In terms of biological role, lacks ADP-ribosylation enhancing activity. This chain is ADP-ribosylation factor-like protein 5A (ARL5A), found in Bos taurus (Bovine).